The following is a 345-amino-acid chain: Anthranilate phosphoribosyltransferase (345 aa).

Residues Gly79, 82–83 (GD), Thr87, 89–92 (NVST), 106–114 (KHGNRAVSG), and Ser118 contribute to the 5-phospho-alpha-D-ribose 1-diphosphate site. An anthranilate-binding site is contributed by Gly79. Residue Ser91 coordinates Mg(2+). Residue Asn109 coordinates anthranilate. Arg164 contacts anthranilate. Positions 223 and 224 each coordinate Mg(2+).

Belongs to the anthranilate phosphoribosyltransferase family. Homodimer. Mg(2+) is required as a cofactor.

The enzyme catalyses N-(5-phospho-beta-D-ribosyl)anthranilate + diphosphate = 5-phospho-alpha-D-ribose 1-diphosphate + anthranilate. It participates in amino-acid biosynthesis; L-tryptophan biosynthesis; L-tryptophan from chorismate: step 2/5. In terms of biological role, catalyzes the transfer of the phosphoribosyl group of 5-phosphorylribose-1-pyrophosphate (PRPP) to anthranilate to yield N-(5'-phosphoribosyl)-anthranilate (PRA). The chain is Anthranilate phosphoribosyltransferase from Saccharolobus islandicus (strain M.14.25 / Kamchatka #1) (Sulfolobus islandicus).